We begin with the raw amino-acid sequence, 444 residues long: Pre-mRNA-splicing factor cwc25 (444 aa).

Disordered regions lie at residues 1-27, 168-385, and 397-425; these read MGSG…QKAE, LASM…TDLD, and EAER…GFMS. The stretch at 19–65 forms a coiled coil; it reads NVAATQKAEAEAIAERKKLQQRLQEIEEERRKEEIQKALEAAGGKRK. Positions 186 to 199 are enriched in basic residues; that stretch reads QRRHKHRSHHHRSD. Basic and acidic residues-rich tracts occupy residues 200–220 and 228–281; these read RHRD…DRDR and DSRD…DDRS. Over residues 282-293 the composition is skewed to basic residues; the sequence is RRHRFPQGRSRS. 3 stretches are compositionally biased toward basic and acidic residues: residues 305 to 344, 360 to 372, and 397 to 410; these read RREY…EQPK, DGDH…ERAK, and EAER…EKAR. The stretch at 364 to 417 forms a coiled coil; sequence KNAEEERAKKLAAMQAAATDLDKAREERLKALAEAERAEREADEKARQQNKKFR.

This sequence belongs to the CWC25 family. In terms of assembly, associated with the spliceosome.

The protein localises to the nucleus. Its function is as follows. Involved in pre-mRNA splicing. The chain is Pre-mRNA-splicing factor cwc25 (msp-6) from Neurospora crassa (strain ATCC 24698 / 74-OR23-1A / CBS 708.71 / DSM 1257 / FGSC 987).